A 346-amino-acid chain; its full sequence is Lipase chaperone (346 aa).

A helical membrane pass occupies residues 10–30; sequence TIVFGVITSVLLLLLLIYYVF.

This sequence belongs to the lipase chaperone family.

The protein resides in the cell inner membrane. Functionally, may be involved in the folding of the extracellular lipase during its passage through the periplasm. The chain is Lipase chaperone (lifO) from Acinetobacter venetianus (strain ATCC 31012 / DSM 23050 / BCRC 14357 / CCUG 45561 / CIP 110063 / KCTC 2702 / LMG 19082 / RAG-1).